The following is a 308-amino-acid chain: UDP-N-acetylenolpyruvoylglucosamine reductase (308 aa).

The region spanning 32 to 196 (VGGPAARLYK…ISAKLQLSPG (165 aa)) is the FAD-binding PCMH-type domain. R176 is an active-site residue. The active-site Proton donor is S225. The active site involves E296.

Belongs to the MurB family. FAD is required as a cofactor.

It is found in the cytoplasm. The catalysed reaction is UDP-N-acetyl-alpha-D-muramate + NADP(+) = UDP-N-acetyl-3-O-(1-carboxyvinyl)-alpha-D-glucosamine + NADPH + H(+). It participates in cell wall biogenesis; peptidoglycan biosynthesis. Functionally, cell wall formation. In Legionella pneumophila (strain Lens), this protein is UDP-N-acetylenolpyruvoylglucosamine reductase.